The primary structure comprises 128 residues: Large-conductance mechanosensitive channel (128 aa).

The next 2 membrane-spanning stretches (helical) occupy residues 10 to 30 and 76 to 96; these read FAMR…GAFG and GLFI…FMMV.

Belongs to the MscL family. As to quaternary structure, homopentamer.

The protein resides in the cell inner membrane. Channel that opens in response to stretch forces in the membrane lipid bilayer. May participate in the regulation of osmotic pressure changes within the cell. This Mannheimia succiniciproducens (strain KCTC 0769BP / MBEL55E) protein is Large-conductance mechanosensitive channel.